Consider the following 794-residue polypeptide: DNA ligase (794 aa).

Positions 1–47 are disordered; the sequence is MEEDLFSLAAGKQPSQQATNETAPRAGEARENAGTDHPGNAEDPAHR. Residues 13–22 show a composition bias toward polar residues; the sequence is QPSQQATNET. Positions 27-47 are enriched in basic and acidic residues; sequence GEARENAGTDHPGNAEDPAHR. Residues 73–77, 122–123, and Glu160 each bind NAD(+); these read DAEYD and SI. The active-site N6-AMP-lysine intermediate is Lys162. NAD(+) is bound by residues Arg183, Glu219, Lys335, and Lys359. The Zn(2+) site is built by Cys457, Cys460, Cys475, and Cys480. Positions 717 to 794 constitute a BRCT domain; it reads IPAGSLSGKT…EEDFYKMIGN (78 aa).

Belongs to the NAD-dependent DNA ligase family. LigA subfamily. Requires Mg(2+) as cofactor. The cofactor is Mn(2+).

It catalyses the reaction NAD(+) + (deoxyribonucleotide)n-3'-hydroxyl + 5'-phospho-(deoxyribonucleotide)m = (deoxyribonucleotide)n+m + AMP + beta-nicotinamide D-nucleotide.. Functionally, DNA ligase that catalyzes the formation of phosphodiester linkages between 5'-phosphoryl and 3'-hydroxyl groups in double-stranded DNA using NAD as a coenzyme and as the energy source for the reaction. It is essential for DNA replication and repair of damaged DNA. The protein is DNA ligase of Akkermansia muciniphila (strain ATCC BAA-835 / DSM 22959 / JCM 33894 / BCRC 81048 / CCUG 64013 / CIP 107961 / Muc).